Reading from the N-terminus, the 23-residue chain is Maculatin-1.2 (23 aa).

Ala23 is subject to Alanine amide.

In terms of tissue distribution, expressed by the skin dorsal glands.

The protein resides in the secreted. Functionally, shows antibacterial activity against S.aureus and S.uberis. The sequence is that of Maculatin-1.2 from Ranoidea genimaculata (Brown-spotted tree frog).